The following is an 87-amino-acid chain: U14-lycotoxin-Ls1a (87 aa).

An N-terminal signal peptide occupies residues 1 to 20 (MNSKVFAVLLLLALSTCVLS). Positions 21-66 (EKYCPTPRNTSCKKMNIRNNCCRDSDCTSNAFCCAEPCGNFCHKAS) constitute a WAP domain. 5 disulfide bridges follow: Cys-24-Cys-54, Cys-32-Cys-58, Cys-41-Cys-53, Cys-42-Cys-80, and Cys-47-Cys-62.

The protein belongs to the venom protein 11 family. 01 (wap-1) subfamily. Contains 5 disulfide bonds. In terms of tissue distribution, expressed by the venom gland.

The protein resides in the secreted. Functionally, has antibacterial activity. The sequence is that of U14-lycotoxin-Ls1a from Lycosa singoriensis (Wolf spider).